The following is a 443-amino-acid chain: Xaa-Pro dipeptidase (443 aa).

The Mn(2+) site is built by D246, D257, H339, E384, and E423.

Belongs to the peptidase M24B family. Bacterial-type prolidase subfamily. It depends on Mn(2+) as a cofactor.

The enzyme catalyses Xaa-L-Pro dipeptide + H2O = an L-alpha-amino acid + L-proline. Functionally, splits dipeptides with a prolyl residue in the C-terminal position. This is Xaa-Pro dipeptidase from Shigella boydii serotype 18 (strain CDC 3083-94 / BS512).